A 350-amino-acid polypeptide reads, in one-letter code: Phenylalanine--tRNA ligase alpha subunit (350 aa).

Glu271 provides a ligand contact to Mg(2+).

It belongs to the class-II aminoacyl-tRNA synthetase family. Phe-tRNA synthetase alpha subunit type 1 subfamily. Tetramer of two alpha and two beta subunits. It depends on Mg(2+) as a cofactor.

Its subcellular location is the cytoplasm. The catalysed reaction is tRNA(Phe) + L-phenylalanine + ATP = L-phenylalanyl-tRNA(Phe) + AMP + diphosphate + H(+). The sequence is that of Phenylalanine--tRNA ligase alpha subunit from Paracidovorax citrulli (strain AAC00-1) (Acidovorax citrulli).